A 227-amino-acid polypeptide reads, in one-letter code: HTH-type transcriptional regulator ArcR (227 aa).

41–130 (VRRYNKGQII…LEYLCKNHDD (90 aa)) lines the a nucleoside 3',5'-cyclic phosphate pocket. The HTH crp-type domain maps to 156–227 (KLARERIEKV…KNGKNWMVIK (72 aa)). The segment at residues 189–208 (IQLLSDLAGISRETTGHIVH) is a DNA-binding region (H-T-H motif).

The protein localises to the cytoplasm. Functionally, positively regulates the expression of the arcABDCR operon under anaerobic conditions, thus playing an essential role in arginine catabolism. May also control the expression of genes encoding proteins which are involved in anaerobic metabolism. Can bind cyclic AMP. This Staphylococcus haemolyticus (strain JCSC1435) protein is HTH-type transcriptional regulator ArcR (arcR).